Reading from the N-terminus, the 335-residue chain is Rho guanine nucleotide exchange factor 39 (335 aa).

The 176-residue stretch at 22 to 197 folds into the DH domain; that stretch reads KRACTARELL…SETAQRVHTI (176 aa). Residues 227–331 form the PH domain; sequence WFLRQGWLLV…WYHSLTWAIS (105 aa).

As to expression, strongly expressed in hepatocellular carcinoma (HCC) compared with their non-cancerous counterparts.

The protein localises to the cell membrane. Its function is as follows. Promotes cell proliferation. The protein is Rho guanine nucleotide exchange factor 39 (ARHGEF39) of Homo sapiens (Human).